The following is a 189-amino-acid chain: MRLKLILYFLILSCYLGIGSARAATLMHGVANTWNSFSDNVSQTWNDPQTFDLYVPAVTWHNRWTYDSDKIDKYNERPWGAGGGISHYDEKGNWNGIYLMAFKDSFNKWEPIGGYGWEKTWRPLADPDFHLGLGYTAGVTMRDNWNYIPIPVLLPLASIGYGSATFQMTYIPGTYNNGNVYFAWLRWQF.

An N-terminal signal peptide occupies residues 1–23 (MRLKLILYFLILSCYLGIGSARA). Active-site residues include H61, D104, and S105.

The protein belongs to the lipid A palmitoyltransferase family. As to quaternary structure, homodimer.

The protein resides in the cell outer membrane. The enzyme catalyses a lipid A + a 1,2-diacyl-sn-glycero-3-phosphocholine = a hepta-acyl lipid A + a 2-acyl-sn-glycero-3-phosphocholine. It carries out the reaction a lipid IVA + a 1,2-diacyl-sn-glycero-3-phosphocholine = a lipid IVB + a 2-acyl-sn-glycero-3-phosphocholine. It catalyses the reaction a lipid IIA + a 1,2-diacyl-sn-glycero-3-phosphocholine = a lipid IIB + a 2-acyl-sn-glycero-3-phosphocholine. Its function is as follows. Transfers a fatty acid residue from the sn-1 position of a phospholipid to the N-linked hydroxyfatty acid chain on the proximal unit of lipid A or its precursors. This chain is Lipid A acyltransferase PagP, found in Erwinia tasmaniensis (strain DSM 17950 / CFBP 7177 / CIP 109463 / NCPPB 4357 / Et1/99).